We begin with the raw amino-acid sequence, 706 residues long: Glutamine-dependent NAD(+) synthetase (706 aa).

Positions 5–275 constitute a CN hydrolase domain; that stretch reads VTVATCALNQ…VEVLTATLDL (271 aa). E45 (proton acceptor; for glutaminase activity) is an active-site residue. Catalysis depends on K114, which acts as the For glutaminase activity. Residue C175 is the Nucleophile; for glutaminase activity of the active site. Residues 325–706 are ligase; that stretch reads YHSPEEEISL…AAPQSLDGVD (382 aa). 355–362 serves as a coordination point for ATP; it reads PLSGGVDS. S357 is a catalytic residue.

It in the C-terminal section; belongs to the NAD synthetase family. As to quaternary structure, homohexamer.

It catalyses the reaction deamido-NAD(+) + L-glutamine + ATP + H2O = L-glutamate + AMP + diphosphate + NAD(+) + H(+). It functions in the pathway cofactor biosynthesis; NAD(+) biosynthesis; NAD(+) from deamido-NAD(+) (L-Gln route): step 1/1. Functionally, catalyzes the final step of the nicotinamide adenine dinucleotide (NAD) de novo synthesis pathway, the ATP-dependent amidation of deamido-NAD using L-glutamine as a nitrogen source. The protein is Glutamine-dependent NAD(+) synthetase (NADSYN1) of Macaca fascicularis (Crab-eating macaque).